Consider the following 105-residue polypeptide: TMEM14 protein homolog YJR085C (105 aa).

The next 3 helical transmembrane spans lie at 26–46 (IPSL…GYLL), 53–73 (GLEM…IRGM), and 77–97 (FTKP…YYYY).

This sequence belongs to the TMEM14 family.

The protein localises to the mitochondrion. It localises to the membrane. The polypeptide is TMEM14 protein homolog YJR085C (Saccharomyces cerevisiae (strain ATCC 204508 / S288c) (Baker's yeast)).